Consider the following 558-residue polypeptide: Laccase-4 (558 aa).

An N-terminal signal peptide occupies residues 1 to 24 (MGSHMVWFLFLVSFFSVFPAPSES). 2 Plastocyanin-like domains span residues 32 to 148 (NVVM…PKRG) and 158 to 308 (NEKV…YSGT). 2 N-linked (GlcNAc...) asparagine glycosylation sites follow: asparagine 37 and asparagine 78. Cu cation is bound by residues histidine 82 and histidine 84. Asparagine 114 is a glycosylation site (N-linked (GlcNAc...) asparagine). Positions 127 and 129 each coordinate Cu cation. N-linked (GlcNAc...) asparagine glycosylation is found at asparagine 187, asparagine 296, asparagine 323, asparagine 330, asparagine 373, asparagine 383, asparagine 400, asparagine 418, and asparagine 441. Positions 408–542 (DFPKNPPHVF…KMAFLVENGK (135 aa)) constitute a Plastocyanin-like 3 domain. Cu cation is bound by residues histidine 459, histidine 462, and histidine 464. Asparagine 479 carries an N-linked (GlcNAc...) asparagine glycan. Residues histidine 521, cysteine 522, histidine 523, and histidine 527 each coordinate Cu cation. An N-linked (GlcNAc...) asparagine glycan is attached at asparagine 545.

Belongs to the multicopper oxidase family. Cu cation is required as a cofactor. In terms of tissue distribution, ubiquitous, with higher levels in the inflorescence stem.

Its subcellular location is the secreted. The protein resides in the extracellular space. It localises to the apoplast. The enzyme catalyses 4 hydroquinone + O2 = 4 benzosemiquinone + 2 H2O. Its function is as follows. Lignin degradation and detoxification of lignin-derived products. Required for secondary xylem cell wall lignification. The chain is Laccase-4 (IRX12) from Arabidopsis thaliana (Mouse-ear cress).